A 458-amino-acid chain; its full sequence is 3-isopropylmalate dehydratase large subunit (458 aa).

[4Fe-4S] cluster-binding residues include cysteine 337, cysteine 397, and cysteine 400.

It belongs to the aconitase/IPM isomerase family. LeuC type 1 subfamily. In terms of assembly, heterodimer of LeuC and LeuD. [4Fe-4S] cluster is required as a cofactor.

It carries out the reaction (2R,3S)-3-isopropylmalate = (2S)-2-isopropylmalate. It participates in amino-acid biosynthesis; L-leucine biosynthesis; L-leucine from 3-methyl-2-oxobutanoate: step 2/4. Functionally, catalyzes the isomerization between 2-isopropylmalate and 3-isopropylmalate, via the formation of 2-isopropylmaleate. The polypeptide is 3-isopropylmalate dehydratase large subunit (Leuconostoc mesenteroides subsp. mesenteroides (strain ATCC 8293 / DSM 20343 / BCRC 11652 / CCM 1803 / JCM 6124 / NCDO 523 / NBRC 100496 / NCIMB 8023 / NCTC 12954 / NRRL B-1118 / 37Y)).